The following is a 244-amino-acid chain: Acidic leucine-rich nuclear phosphoprotein 32 family member A (244 aa).

LRR repeat units lie at residues 18 to 41 (DVKELVLDNCRSKEGKIEGLTDEF), 43 to 64 (GLEFLSTINVCLSSIANLPKLN), 65 to 87 (KLKKLELSDNNISGGLEVLAEKC), and 89 to 110 (NLTHLNLSGNRIKDLSTIEPLK). One can recognise an LRRCT domain in the interval 123–161 (CEVTNLNDYRENLFKLLPQLTYLDGYDRDDKEAPDSDAE). Positions 148–244 (YDRDDKEAPD…DQDDEGEDDD (97 aa)) are disordered. The span at 157–227 (DSDAEGYVEG…EEDEGDEEAE (71 aa)) shows a compositional bias: acidic residues.

This sequence belongs to the ANP32 family. Post-translationally, phosphorylated on serine residues.

It localises to the nucleus. The protein resides in the cytoplasm. Its subcellular location is the endoplasmic reticulum. In terms of biological role, implicated in a number of cellular processes, including proliferation, differentiation, caspase-dependent and caspase-independent apoptosis, suppression of transformation (tumor suppressor), inhibition of protein phosphatase 2A, regulation of mRNA trafficking and stability, and inhibition of acetyltransferases as part of the INHAT (inhibitor of histone acetyltransferases) complex. The polypeptide is Acidic leucine-rich nuclear phosphoprotein 32 family member A (anp32a) (Xenopus laevis (African clawed frog)).